The following is a 184-amino-acid chain: Photosystem I assembly protein Ycf4 (184 aa).

Transmembrane regions (helical) follow at residues 22 to 42 (FCWACILLLGSLGFLLVGISS) and 64 to 84 (IVMSFYGIAGLFISSYLWSTI).

It belongs to the Ycf4 family.

It is found in the plastid. Its subcellular location is the chloroplast thylakoid membrane. Its function is as follows. Seems to be required for the assembly of the photosystem I complex. The sequence is that of Photosystem I assembly protein Ycf4 from Piper cenocladum (Ant piper).